The primary structure comprises 559 residues: N-acetylglucosamine-6-sulfatase (559 aa).

Residues 1–26 (MRFLSLAPDRPRRGGPRHLPSGSPAP) are disordered. A signal peptide spans 1-47 (MRFLSLAPDRPRRGGPRHLPSGSPAPPPPPPLLLLLLLGGCLGVSGA). The Ca(2+) site is built by aspartate 62, aspartate 63, and cysteine 98. Cysteine 98 acts as the Nucleophile in catalysis. Cysteine 98 is subject to 3-oxoalanine (Cys). Residues asparagine 118, asparagine 124, asparagine 190, asparagine 205, asparagine 217, asparagine 286, and asparagine 324 are each glycosylated (N-linked (GlcNAc...) asparagine). Ca(2+)-binding residues include aspartate 333 and asparagine 334. Asparagine 369, asparagine 394, asparagine 412, asparagine 429, asparagine 456, and asparagine 487 each carry an N-linked (GlcNAc...) asparagine glycan. A Phosphoserine modification is found at serine 548.

The protein belongs to the sulfatase family. The cofactor is Ca(2+). Processed by internal peptidase. In terms of processing, the conversion to 3-oxoalanine (also known as C-formylglycine, FGly), of a serine or cysteine residue in prokaryotes and of a cysteine residue in eukaryotes, is critical for catalytic activity.

The protein localises to the lysosome. It carries out the reaction Hydrolysis of the 6-sulfate groups of the N-acetyl-D-glucosamine 6-sulfate units of heparan sulfate and keratan sulfate.. Hydrolyzes 6-sulfate groups in N-acetyl-d-glucosaminide units of heparin sulfate and keratan sulfate. The polypeptide is N-acetylglucosamine-6-sulfatase (GNS) (Capra hircus (Goat)).